The chain runs to 258 residues: UPF0246 protein YaaA (258 aa).

It belongs to the UPF0246 family.

This chain is UPF0246 protein YaaA, found in Escherichia coli O17:K52:H18 (strain UMN026 / ExPEC).